Reading from the N-terminus, the 50-residue chain is Major pollen allergen Ole e 6 (50 aa).

3 disulfide bridges follow: C8-C34, C12-C30, and C16-C26.

As to expression, expressed in pollen.

In Olea europaea (Common olive), this protein is Major pollen allergen Ole e 6 (OLE6).